The primary structure comprises 198 residues: NADH-quinone oxidoreductase subunit C (198 aa).

This sequence belongs to the complex I 30 kDa subunit family. In terms of assembly, NDH-1 is composed of 14 different subunits. Subunits NuoB, C, D, E, F, and G constitute the peripheral sector of the complex.

It localises to the cell inner membrane. It catalyses the reaction a quinone + NADH + 5 H(+)(in) = a quinol + NAD(+) + 4 H(+)(out). Its function is as follows. NDH-1 shuttles electrons from NADH, via FMN and iron-sulfur (Fe-S) centers, to quinones in the respiratory chain. The immediate electron acceptor for the enzyme in this species is believed to be ubiquinone. Couples the redox reaction to proton translocation (for every two electrons transferred, four hydrogen ions are translocated across the cytoplasmic membrane), and thus conserves the redox energy in a proton gradient. The sequence is that of NADH-quinone oxidoreductase subunit C from Herminiimonas arsenicoxydans.